A 2148-amino-acid polypeptide reads, in one-letter code: Polyketide synthase 1 (2148 aa).

Residues 19-261 (FIFGDQSSCN…TPLAVHAPYH (243 aa)) are N-terminal acylcarrier protein transacylase domain (SAT). Residues 394-829 (ESKIAIIGMS…GGNTALLVED (436 aa)) enclose the Ketosynthase family 3 (KS3) domain. Catalysis depends on for beta-ketoacyl synthase activity residues Cys-566, His-701, and His-745. Residues 929 to 1233 (AFVFSGQGSQ…PSLMRNKDGW (305 aa)) form a malonyl-CoA:ACP transacylase (MAT) domain region. Ser-1018 acts as the For acyl/malonyl transferase activity in catalysis. Residues 1310-1624 (TASVHRIVHE…RKVLNTAMPP (315 aa)) are product template (PT) domain. Positions 1314-1447 (HRIVHESVDK…SSLHFEQPKV (134 aa)) are N-terminal hotdog fold. The 306-residue stretch at 1314–1619 (HRIVHESVDK…FQGIPRKVLN (306 aa)) folds into the PKS/mFAS DH domain. Catalysis depends on His-1346, which acts as the Proton acceptor; for dehydratase activity. The segment at 1474–1619 (LNSRMSSGVI…FQGIPRKVLN (146 aa)) is C-terminal hotdog fold. Asp-1533 (proton donor; for dehydratase activity) is an active-site residue. Residues 1619–1657 (NTAMPPPKSQNEAPVRSAPAKPAAKPPKSASSEHSGHFA) form a disordered region. Over residues 1635 to 1650 (SAPAKPAAKPPKSASS) the composition is skewed to low complexity. The region spanning 1678-1752 (RNPMLAVFKI…DLATHLGLDT (75 aa)) is the Carrier 1 domain. Ser-1712 carries the O-(pantetheine 4'-phosphoryl)serine modification. Over residues 1755-1790 (SDQSSGQSSSSGGLSPRSDSIGEITSSATTPPSLSP) the composition is skewed to low complexity. The segment at 1755–1796 (SDQSSGQSSSSGGLSPRSDSIGEITSSATTPPSLSPRGSVSG) is disordered. Residues 1793 to 1870 (SVSGSQCKDV…SFKHMFQQGH (78 aa)) form the Carrier 2 domain. Ser-1830 is modified (O-(pantetheine 4'-phosphoryl)serine). The segment at 1882–2146 (LKQYRATSTL…ERVAAFIRST (265 aa)) is thioesterase (TE) domain. The For thioesterase activity role is filled by Ser-1973.

Polyketide synthase; part of the Pks1 gene cluster that mediates the biosynthesis of an anthraquinone derivative pigment that contributes to conidial pigmentation that provides protection from UV radiation, heat and cold stress. The polyketide synthase Pks1 produces 1-acetyl-2,4,6,8-tetrahydroxy-9,10-anthraquinone though condensation of acetyl-CoA with malonyl-CoA. The dehydratase EthD and the laccase Mlac1 further convert the anthraquinone derivative into the final conidial pigment. This is Polyketide synthase 1 from Metarhizium guizhouense (strain ARSEF 977).